Reading from the N-terminus, the 414-residue chain is Wilms tumor protein homolog A (414 aa).

Residues lysine 55 and lysine 158 each participate in a glycyl lysine isopeptide (Lys-Gly) (interchain with G-Cter in SUMO) cross-link. The 9aaTAD signature appears at 217–225 (MTWNQMNLG). 3 consecutive C2H2-type zinc fingers follow at residues 288-312 (FMCA…SRKH), 318-342 (YQCD…QRRH), and 348-370 (FQCK…TRTH). Important for interaction with target DNA stretches follow at residues 332 to 346 (SDQL…TGIK) and 358 to 366 (SRSDHLKTH). The KTS motif motif lies at 373 to 375 (KTS). The C2H2-type 4 zinc finger occupies 379–403 (FSCRWPSCQKKFARSDELVRHHNMH).

Belongs to the EGR C2H2-type zinc-finger protein family. As to expression, expressed around the pronephric anlage and in the pronephros; expression is restricted to the splanchnic mesoderm (the site where the glomus forms) from tailbud stages, and the glomus of early tadpoles. Not expressed in the pronephric tubules or pronephric duct. In tadpoles (stage 38-39), additional expression begins in the heart. Also expressed in the adult kidney (mesonephros).

The protein localises to the nucleus. The protein resides in the cytoplasm. It is found in the nucleus speckle. In terms of biological role, transcription factor required for development of the vascular component of the pronephric kidney, the glomus; may repress tubule-specific gene expression in the portion of the pronephros fated to form the glomus. Recognizes and binds to the DNA sequence 5'-GCG(T/G)GGGCG-3'. Inhibits Wnt-signaling during embryonic development. Function may be isoform-specific: the isoform containing the KTS motif is less effective in inhibiting wnt signaling. The sequence is that of Wilms tumor protein homolog A (wt1-a) from Xenopus laevis (African clawed frog).